Reading from the N-terminus, the 336-residue chain is E3 ubiquitin-protein ligase RING2 (336 aa).

The tract at residues 2–179 (TQTVQTNGVQ…AEDNGDSSHC (178 aa)) is interaction with HIP2. Residues 51–91 (CPICLDMLKNTMTTKECLHRFCADCIITALRSGNKECPTCR) form an RING-type zinc finger. The tract at residues 93-98 (KLVSKR) is interaction with nucleosomes via an acidic patch on histone H2A and histone H2B. A disordered region spans residues 158–218 (RGKKHQIENG…NATENGGGDI (61 aa)). Residues 176–190 (SSHCSNASVHSNQEA) are compositionally biased toward polar residues.

Component of chromatin-associated Polycomb (PcG) complexes. Component of a PRC1-like complex. Component of some MLL1/MLL complex.

The protein localises to the nucleus. The protein resides in the cytoplasm. Its subcellular location is the chromosome. It carries out the reaction S-ubiquitinyl-[E2 ubiquitin-conjugating enzyme]-L-cysteine + [acceptor protein]-L-lysine = [E2 ubiquitin-conjugating enzyme]-L-cysteine + N(6)-ubiquitinyl-[acceptor protein]-L-lysine.. It participates in protein modification; protein ubiquitination. Its function is as follows. E3 ubiquitin-protein ligase that mediates monoubiquitination of 'Lys-119' of histone H2A (H2AK119Ub), thereby playing a central role in histone code and gene regulation. H2AK119Ub gives a specific tag for epigenetic transcriptional repression. Essential component of a Polycomb group (PcG) multiprotein PRC1-like complex, a complex class required to maintain the transcriptionally repressive state of many genes, including Hox genes, throughout development. PcG PRC1 complex acts via chromatin remodeling and modification of histones, rendering chromatin heritably changed in its expressibility. This Danio rerio (Zebrafish) protein is E3 ubiquitin-protein ligase RING2 (rnf2).